Reading from the N-terminus, the 360-residue chain is MEECWVTEIANGSKDGLDSNPMKDYMILSGPQKTAVAVLCTLLGLLSALENVAVLYLILSSHQLRRKPSYLFIGSLAGADFLASVVFACSFVNFHVFHGVDSKAVFLLKIGSVTMTFTASVGSLLLTAIDRYLCLRYPPSYKALLTRGRALVTLGIMWVLSALVSYLPLMGWTCCPRPCSELFPLIPNDYLLSWLLFIAFLFSGIIYTYGHVLWKAHQHVASLSGHQDRQVPGMARMRLDVRLAKTLGLVLAVLLICWFPVLALMAHSLATTLSDQVKKAFAFCSMLCLINSMVNPVIYALRSGEIRSSAHHCLAHWKKCVRGLGSEAKEEAPRSSVTETEADGKITPWPDSRDLDLSDC.

Residues Met-1–Lys-33 are Extracellular-facing. A glycan (N-linked (GlcNAc...) asparagine) is linked at Asn-11. A helical transmembrane segment spans residues Thr-34–Leu-59. Over Ser-60–Leu-71 the chain is Cytoplasmic. A helical membrane pass occupies residues Phe-72–Val-92. At Asn-93 to Ala-104 the chain is on the extracellular side. Residues Val-105 to Ile-129 form a helical membrane-spanning segment. Over Asp-130–Arg-149 the chain is Cytoplasmic. The helical transmembrane segment at Ala-150–Trp-172 threads the bilayer. The Extracellular segment spans residues Thr-173–Asn-188. A helical membrane pass occupies residues Asp-189–Trp-214. At Lys-215 to Thr-246 the chain is on the cytoplasmic side. A helical transmembrane segment spans residues Leu-247 to His-267. Topologically, residues Ser-268–Lys-279 are extracellular. Residues Ala-280 to Leu-301 form a helical membrane-spanning segment. Residues Arg-302–Cys-360 lie on the Cytoplasmic side of the membrane. A disordered region spans residues Glu-327–Cys-360. 2 positions are modified to phosphoserine: Ser-335 and Ser-336. Thr-338 carries the post-translational modification Phosphothreonine. Residues Asp-351–Cys-360 show a composition bias toward basic and acidic residues. Ser-352 carries the phosphoserine modification.

The protein belongs to the G-protein coupled receptor 1 family. Constitutively phosphorylated on Ser-352; phosphorylation increases cell internalization and desensitizes the receptor. In terms of tissue distribution, preferentially expressed in cells of the immune system with higher expression in B-cells and NK cells (at protein level). Expressed in skin in suprabasal layers and hair follicles (at protein level). Highly expressed in tonsil and to a lower extent in spleen, peripheral blood mononuclear cells, and thymus. PubMed:14657172 could not detect expression in normal brain. Expressed in brain by perivascular microglial cells and dorsal root ganglion sensory neurons (at protein level). Two isoforms are produced by alternative promoter usage and differ only in the 5' UTR: isoform CB2A is observed predominantly in testis with some expression in brain, while isoform CB2B is predominant in spleen and leukocytes.

The protein localises to the cell membrane. It localises to the cell projection. The protein resides in the dendrite. It is found in the perikaryon. In terms of biological role, heterotrimeric G protein-coupled receptor for endocannabinoid 2-arachidonoylglycerol mediating inhibition of adenylate cyclase. May function in inflammatory response, nociceptive transmission and bone homeostasis. The sequence is that of Cannabinoid receptor 2 (CNR2) from Homo sapiens (Human).